We begin with the raw amino-acid sequence, 227 residues long: UPF0173 metal-dependent hydrolase BALH_4194 (227 aa).

The protein belongs to the UPF0173 family.

The chain is UPF0173 metal-dependent hydrolase BALH_4194 from Bacillus thuringiensis (strain Al Hakam).